The following is a 200-amino-acid chain: Small ribosomal subunit protein uS4 (200 aa).

The interval 22–42 is disordered; sequence TGKELEKRPYAPGPHGPGQRK. Residues 92-152 enclose the S4 RNA-binding domain; sequence SRLDNIVYRL…EKSQNLSVVK (61 aa).

This sequence belongs to the universal ribosomal protein uS4 family. In terms of assembly, part of the 30S ribosomal subunit. Contacts protein S5. The interaction surface between S4 and S5 is involved in control of translational fidelity.

In terms of biological role, one of the primary rRNA binding proteins, it binds directly to 16S rRNA where it nucleates assembly of the body of the 30S subunit. Its function is as follows. With S5 and S12 plays an important role in translational accuracy. This is Small ribosomal subunit protein uS4 from Bacillus licheniformis (strain ATCC 14580 / DSM 13 / JCM 2505 / CCUG 7422 / NBRC 12200 / NCIMB 9375 / NCTC 10341 / NRRL NRS-1264 / Gibson 46).